Here is a 540-residue protein sequence, read N- to C-terminus: Phosphoenolpyruvate carboxykinase (ATP) (540 aa).

Arg-65 lines the substrate pocket. An N6-acetyllysine modification is found at Lys-87. Positions 207 and 213 each coordinate substrate. ATP contacts are provided by residues Lys-213, His-232, and 248-256 (GLSGTGKTT). Mn(2+)-binding residues include Lys-213 and His-232. A Mn(2+)-binding site is contributed by Asp-269. ATP is bound by residues Glu-297, Arg-333, 449 to 450 (RI), and Thr-455. Arg-333 is a binding site for substrate. At Lys-523 the chain carries N6-acetyllysine.

It belongs to the phosphoenolpyruvate carboxykinase (ATP) family. Monomer. The cofactor is Mn(2+).

The protein localises to the cytoplasm. It carries out the reaction oxaloacetate + ATP = phosphoenolpyruvate + ADP + CO2. The protein operates within carbohydrate biosynthesis; gluconeogenesis. In terms of biological role, involved in the gluconeogenesis. Catalyzes the conversion of oxaloacetate (OAA) to phosphoenolpyruvate (PEP) through direct phosphoryl transfer between the nucleoside triphosphate and OAA. The protein is Phosphoenolpyruvate carboxykinase (ATP) of Shigella flexneri.